The primary structure comprises 133 residues: Aspartate 1-decarboxylase (133 aa).

Residue S26 is the Schiff-base intermediate with substrate; via pyruvic acid of the active site. Pyruvic acid (Ser) is present on S26. A substrate-binding site is contributed by T58. The Proton donor role is filled by Y59. Substrate is bound at residue 74 to 76 (GAA).

Belongs to the PanD family. Heterooctamer of four alpha and four beta subunits. It depends on pyruvate as a cofactor. Post-translationally, is synthesized initially as an inactive proenzyme, which is activated by self-cleavage at a specific serine bond to produce a beta-subunit with a hydroxyl group at its C-terminus and an alpha-subunit with a pyruvoyl group at its N-terminus.

The protein localises to the cytoplasm. The catalysed reaction is L-aspartate + H(+) = beta-alanine + CO2. It functions in the pathway cofactor biosynthesis; (R)-pantothenate biosynthesis; beta-alanine from L-aspartate: step 1/1. Catalyzes the pyruvoyl-dependent decarboxylation of aspartate to produce beta-alanine. The protein is Aspartate 1-decarboxylase of Legionella pneumophila subsp. pneumophila (strain Philadelphia 1 / ATCC 33152 / DSM 7513).